A 346-amino-acid chain; its full sequence is Small ribosomal subunit biogenesis GTPase RsgA (346 aa).

The CP-type G domain occupies 98 to 261 (VQGGRGPQLA…VIDTPGMRTL (164 aa)). Residues 148-151 (TKAD) and 200-208 (GSSGVGKST) each bind GTP. 4 residues coordinate Zn(2+): cysteine 284, cysteine 289, histidine 291, and cysteine 297. Positions 317-346 (RKLSDENQHNTPVQSGPRGAKSPAGRGKRR) are disordered.

This sequence belongs to the TRAFAC class YlqF/YawG GTPase family. RsgA subfamily. In terms of assembly, monomer. Associates with 30S ribosomal subunit, binds 16S rRNA. Requires Zn(2+) as cofactor.

It is found in the cytoplasm. Functionally, one of several proteins that assist in the late maturation steps of the functional core of the 30S ribosomal subunit. Helps release RbfA from mature subunits. May play a role in the assembly of ribosomal proteins into the subunit. Circularly permuted GTPase that catalyzes slow GTP hydrolysis, GTPase activity is stimulated by the 30S ribosomal subunit. The sequence is that of Small ribosomal subunit biogenesis GTPase RsgA from Mesorhizobium japonicum (strain LMG 29417 / CECT 9101 / MAFF 303099) (Mesorhizobium loti (strain MAFF 303099)).